Reading from the N-terminus, the 343-residue chain is N-acetyl-gamma-glutamyl-phosphate reductase (343 aa).

The active site involves cysteine 149.

The protein belongs to the NAGSA dehydrogenase family. Type 1 subfamily.

Its subcellular location is the cytoplasm. The catalysed reaction is N-acetyl-L-glutamate 5-semialdehyde + phosphate + NADP(+) = N-acetyl-L-glutamyl 5-phosphate + NADPH + H(+). Its pathway is amino-acid biosynthesis; L-arginine biosynthesis; N(2)-acetyl-L-ornithine from L-glutamate: step 3/4. Catalyzes the NADPH-dependent reduction of N-acetyl-5-glutamyl phosphate to yield N-acetyl-L-glutamate 5-semialdehyde. This is N-acetyl-gamma-glutamyl-phosphate reductase from Methanococcus maripaludis (strain C7 / ATCC BAA-1331).